The following is a 552-amino-acid chain: MTKYVFVTGGVVSSLGKGIAAASLAAILESRGLKVTLLKLDPYINVDPGTMSPFQHGEVFVTEDGAETDLDLGHYERFISTKMRKANNFTTGQIYESVIRKERRGDYLGKTVQVIPHITNEIQAFIERGAASATCGEPDVAIVEIGGTVGDIESLPFLEAARQMSLRLGRNSACFVHLTLVPYVATAGELKTKPTQHSVQKLREIGILPHVLLCRADRRIPDDESKKISMFSNVPEDAVISVWDADSIYKIPQMLHDQGLDRIICDELKLSPKEADLSMWSELVEKLEHPKHEVTIGMVGKYVDLTESYKSLIEALRHASLHTSTKVNIEYIDSEEIESNGVDSLKHLDAVLVPGGFGRRGTEGKIAAIRYAREAKVPYLGICLGMQLAVIEFARDVVGLKQANSTEFDPDTPERVVALITEWYDREGKVETRTESSDLGGTMRLGSQRCPIKPGTMAEEIYGKDVNERHRHRYEVNNRFVPQLEAGGLIISARTPSEDLPEMMELPRSMHPWFVGVQFHPEFTSTPRDGHPLFKSFVEAALANKQARGAEA.

The interval 1–270 is amidoligase domain; it reads MTKYVFVTGG…DRIICDELKL (270 aa). A CTP-binding site is contributed by serine 13. Residue serine 13 coordinates UTP. Residues 14 to 19 and aspartate 71 each bind ATP; that span reads SLGKGI. Mg(2+) contacts are provided by aspartate 71 and glutamate 144. CTP is bound by residues 151–153, 191–196, and lysine 227; these read DIE and KTKPTQ. Residues 191–196 and lysine 227 contribute to the UTP site; that span reads KTKPTQ. Residues 295-547 enclose the Glutamine amidotransferase type-1 domain; it reads TIGMVGKYVD…VEAALANKQA (253 aa). Glycine 356 contributes to the L-glutamine binding site. Residue cysteine 383 is the Nucleophile; for glutamine hydrolysis of the active site. Residues 384-387, glutamate 407, and arginine 473 contribute to the L-glutamine site; that span reads LGMQ. Residues histidine 520 and glutamate 522 contribute to the active site.

This sequence belongs to the CTP synthase family. As to quaternary structure, homotetramer.

The catalysed reaction is UTP + L-glutamine + ATP + H2O = CTP + L-glutamate + ADP + phosphate + 2 H(+). The enzyme catalyses L-glutamine + H2O = L-glutamate + NH4(+). It catalyses the reaction UTP + NH4(+) + ATP = CTP + ADP + phosphate + 2 H(+). It participates in pyrimidine metabolism; CTP biosynthesis via de novo pathway; CTP from UDP: step 2/2. Allosterically activated by GTP, when glutamine is the substrate; GTP has no effect on the reaction when ammonia is the substrate. The allosteric effector GTP functions by stabilizing the protein conformation that binds the tetrahedral intermediate(s) formed during glutamine hydrolysis. Inhibited by the product CTP, via allosteric rather than competitive inhibition. Functionally, catalyzes the ATP-dependent amination of UTP to CTP with either L-glutamine or ammonia as the source of nitrogen. Regulates intracellular CTP levels through interactions with the four ribonucleotide triphosphates. In Burkholderia vietnamiensis (strain G4 / LMG 22486) (Burkholderia cepacia (strain R1808)), this protein is CTP synthase.